The chain runs to 372 residues: Ligninase A (372 aa).

An N-terminal signal peptide occupies residues 1–21 (MAFKQLVAAISLALSLTTANA). Positions 22–28 (AVVKEKR) are excised as a propeptide. 4 disulfides stabilise this stretch: cysteine 31–cysteine 43, cysteine 42–cysteine 313, cysteine 62–cysteine 148, and cysteine 277–cysteine 345. Histidine 75 functions as the Proton acceptor in the catalytic mechanism. Positions 76, 94, 96, and 98 each coordinate Ca(2+). Histidine 204 contacts heme b. Ca(2+) is bound by residues serine 205, aspartate 222, threonine 224, isoleucine 227, and aspartate 229. Asparagine 285 carries N-linked (GlcNAc...) asparagine glycosylation.

This sequence belongs to the peroxidase family. Ligninase subfamily. Heme b is required as a cofactor. Ca(2+) serves as cofactor.

It carries out the reaction 1-(3,4-dimethoxyphenyl)-2-(2-methoxyphenoxy)propane-1,3-diol + H2O2 = 3,4-dimethoxybenzaldehyde + guaiacol + glycolaldehyde + H2O. The enzyme catalyses 2 (3,4-dimethoxyphenyl)methanol + H2O2 = 2 (3,4-dimethoxyphenyl)methanol radical + 2 H2O. Its pathway is secondary metabolite metabolism; lignin degradation. Its function is as follows. Depolymerization of lignin. Catalyzes the C(alpha)-C(beta) cleavage of the propyl side chains of lignin. The chain is Ligninase A (LIPA) from Phanerodontia chrysosporium (White-rot fungus).